Reading from the N-terminus, the 230-residue chain is Cytidylate kinase (230 aa).

ATP is bound at residue glycine 10–threonine 18.

The protein belongs to the cytidylate kinase family. Type 1 subfamily.

It is found in the cytoplasm. The catalysed reaction is CMP + ATP = CDP + ADP. It catalyses the reaction dCMP + ATP = dCDP + ADP. The sequence is that of Cytidylate kinase from Leptospira borgpetersenii serovar Hardjo-bovis (strain L550).